A 292-amino-acid chain; its full sequence is 33 kDa chaperonin (292 aa).

2 disulfides stabilise this stretch: Cys-230–Cys-232 and Cys-263–Cys-266.

This sequence belongs to the HSP33 family. Post-translationally, under oxidizing conditions two disulfide bonds are formed involving the reactive cysteines. Under reducing conditions zinc is bound to the reactive cysteines and the protein is inactive.

It localises to the cytoplasm. In terms of biological role, redox regulated molecular chaperone. Protects both thermally unfolding and oxidatively damaged proteins from irreversible aggregation. Plays an important role in the bacterial defense system toward oxidative stress. The polypeptide is 33 kDa chaperonin (Escherichia coli O7:K1 (strain IAI39 / ExPEC)).